The primary structure comprises 302 residues: Acetylxylan esterase (302 aa).

Positions 1-20 are cleaved as a signal peptide; sequence MPSVKETLTLLLSQAFLATG. The propeptide occupies 21–31; sequence SPVDGETVVKR. Position 32 is a pyrrolidone carboxylic acid (glutamine 32). N-linked (GlcNAc...) asparagine glycosylation is present at asparagine 94. Residue serine 121 is part of the active site. Positions 236-273 are disordered; sequence QLSSGGSQPPGGGPTSTSRPTSTRTGSSPGPTQTHWGQ. Residues 244–266 are linker; sequence PPGGGPTSTSRPTSTRTGSSPGP. Residues 250-269 are compositionally biased toward low complexity; sequence TSTSRPTSTRTGSSPGPTQT. One can recognise a CBM1 domain in the interval 266–302; it reads PTQTHWGQCGGQGWTGPTQCESGTTCQVISQWYSQCL. Intrachain disulfides connect cysteine 274-cysteine 291 and cysteine 285-cysteine 301.

Belongs to the cutinase family. Acetylxylan esterase subfamily. In terms of assembly, monomer. In terms of processing, glycosylated.

The protein resides in the secreted. It carries out the reaction Deacetylation of xylans and xylo-oligosaccharides.. Its pathway is glycan degradation; xylan degradation. Its activity is regulated as follows. Inhibited by phenylmethylsulfonyl flouride. Degrades acetylated xylans by cleaving acetyl side groups from the hetero-xylan backbone. This is Acetylxylan esterase (axe1) from Hypocrea jecorina (Trichoderma reesei).